Here is a 132-residue protein sequence, read N- to C-terminus: D-ribose pyranase (132 aa).

His20 acts as the Proton donor in catalysis. Substrate is bound by residues Asp28, His99, and 121–123 (YSN).

The protein belongs to the RbsD / FucU family. RbsD subfamily. Homodecamer.

It localises to the cytoplasm. The catalysed reaction is beta-D-ribopyranose = beta-D-ribofuranose. It functions in the pathway carbohydrate metabolism; D-ribose degradation; D-ribose 5-phosphate from beta-D-ribopyranose: step 1/2. Functionally, catalyzes the interconversion of beta-pyran and beta-furan forms of D-ribose. The polypeptide is D-ribose pyranase (Streptococcus agalactiae serotype III (strain NEM316)).